The chain runs to 366 residues: Septin-1 (366 aa).

A Septin-type G domain is found at Lys-22–Ser-295. Residues Gly-32–Ser-39 form a G1 motif region. GTP-binding positions include Gly-32–Ser-39, Thr-66, Gly-92, and Lys-171–Glu-179. Positions Asp-89–Gly-92 are G3 motif. Residues Gly-170–Asp-173 are G4 motif. Ser-206 is modified (phosphoserine). The GTP site is built by Gly-229 and Arg-244. Ser-247 bears the Phosphoserine mark. Thr-250 carries the post-translational modification Phosphothreonine. Residues Ser-306 and Ser-314 each carry the phosphoserine; by AURKB modification. Residues Glu-347 to Leu-366 are disordered. Residues Met-349–Leu-366 show a composition bias toward low complexity.

Belongs to the TRAFAC class TrmE-Era-EngA-EngB-Septin-like GTPase superfamily. Septin GTPase family. In terms of assembly, septins polymerize into heterooligomeric protein complexes that form filaments, and can associate with cellular membranes, actin filaments and microtubules. GTPase activity is required for filament formation. Interacts with AURKB.

The protein localises to the cytoplasm. Its subcellular location is the cytoskeleton. The protein resides in the microtubule organizing center. It localises to the centrosome. It is found in the midbody. Functionally, filament-forming cytoskeletal GTPase. May play a role in cytokinesis (Potential). This is Septin-1 from Mus musculus (Mouse).